The primary structure comprises 384 residues: Terpene cyclase ascI (384 aa).

The signal sequence occupies residues 1-25; the sequence is MPQLAGKLILAGLIPLGAWVLHGFA. The chain crosses the membrane as a helical span at residues 82 to 102; sequence LSLHAFMFAGQGVPLLVLNML. Residue Asn109 is glycosylated (N-linked (GlcNAc...) asparagine). A run of 4 helical transmembrane segments spans residues 119–139, 164–184, 194–214, and 235–255; these read VFGI…YLFL, AVGF…SLPH, VLSV…AYFA, and GAVY…TFAI. N-linked (GlcNAc...) asparagine glycosylation is present at Asn258. 2 helical membrane passes run 291–311 and 330–350; these read WFLQ…AIGI and IALR…ALSL. Asn372 carries an N-linked (GlcNAc...) asparagine glycan.

This sequence belongs to the membrane-bound ascI terpene cyclase family.

The protein resides in the membrane. The enzyme catalyses 16-hydroxy-ilicicolin A epoxide = ascofuranol. The protein operates within secondary metabolite biosynthesis; terpenoid biosynthesis. Functionally, epoxide hydrolase; part of the asc-2 gene cluster that mediates the biosynthesis of ascofuranone, a strong inhibitor of cyanide-insensitive alternative oxidases and a promising drug candidate against African trypanosomiasis. The first step in the pathway is performed by the non-reducing polyketide synthase ascC that produces orsellinic acid by condensing acetyl-CoA with 3 malonyl-CoA units. Orsellinic acid is then prenylated by the prenyltransferase ascA to yield ilicicolinic acid B. Ilicicolinic acid B is further reduced to ilicicolin B by the reductase ascB. The halogenase ascD then chlorinates ilicicolin B to produce ilicicolin A which is converted to ilicicolin A epoxide by the cytochrome P450 monooxygenase ascE that catalyzes stereoselective epoxidation of the terminal double bond of the prenyl group. Ilicicolin A epoxide is the last common precursor for the biosynthesis of ascofuranone and ascochlorin. The terpene cyclase ascF produces a monocyclic terpene, and the cyclization reaction is proposed to be initiated by protonation of the terminal epoxide of ilicicolin A epoxide to generate a monocyclic tertiarycation, which is followed by a series of hydride and methyl shifts with abstraction of proton, leading to the formation of the (14S,15R,19R)-trimethylcyclohexanone ring structure of ilicicolin C, which is finally reduced to ascochlorin by the dehydrogenase ascG. On the other hand, ilicicolin A epoxide is hydroxylated by the cytochrome P450 monooxygenase ascH, and the resultant product is cyclized by the terpene cyclase ascI to ascofuranol via protonation-initiated epoxide ring opening, which facilitates the 6-endo-tet cyclization to form the tetrahy-drofuran ring. Finally, ascofuranol is oxidized into ascofuranone by ascJ. This Acremonium egyptiacum (Oospora egyptiaca) protein is Terpene cyclase ascI.